We begin with the raw amino-acid sequence, 432 residues long: Trigger factor (432 aa).

One can recognise a PPIase FKBP-type domain in the interval 161–246 (EDRVTIDFTG…LKKVEERGLP (86 aa)).

This sequence belongs to the FKBP-type PPIase family. Tig subfamily.

It is found in the cytoplasm. The enzyme catalyses [protein]-peptidylproline (omega=180) = [protein]-peptidylproline (omega=0). Its function is as follows. Involved in protein export. Acts as a chaperone by maintaining the newly synthesized protein in an open conformation. Functions as a peptidyl-prolyl cis-trans isomerase. The sequence is that of Trigger factor from Salmonella choleraesuis (strain SC-B67).